The primary structure comprises 178 residues: uncharacterized protein (178 aa).

Residues 1-16 (MNKRTSVDASKEDLHP) show a composition bias toward basic and acidic residues. The tract at residues 1–43 (MNKRTSVDASKEDLHPADPQSGEGVPPNRKNTKTSPRGEGTAP) is disordered.

This is an uncharacterized protein from Homo sapiens (Human).